Here is a 349-residue protein sequence, read N- to C-terminus: Sphingolipid C4-hydroxylase SUR2 (349 aa).

Transmembrane regions (helical) follow at residues Ala-9 to Ala-29, Val-50 to Ile-70, Phe-99 to Phe-119, Ile-148 to Val-168, and Pro-209 to Leu-229. The Fatty acid hydroxylase domain maps to Phe-162 to Thr-297.

It belongs to the sterol desaturase family.

It localises to the endoplasmic reticulum membrane. The enzyme catalyses sphinganine + 2 Fe(II)-[cytochrome b5] + O2 + 2 H(+) = (4R)-hydroxysphinganine + 2 Fe(III)-[cytochrome b5] + H2O. It carries out the reaction an N-acylsphinganine + 2 Fe(II)-[cytochrome b5] + O2 + 2 H(+) = an N-acyl-(4R)-4-hydroxysphinganine + 2 Fe(III)-[cytochrome b5] + H2O. The catalysed reaction is an N-acyleicosasphinganine + 2 Fe(II)-[cytochrome b5] + O2 + 2 H(+) = N-acyl-4-hydroxyeicosasphinganine + 2 Fe(III)-[cytochrome b5] + H2O. It participates in membrane lipid metabolism; sphingolipid biosynthesis. Functionally, required for hydroxylation of C-4 in the sphingoid moiety of ceramide. Catalyzes the conversion of sphinganine to phytosphingosine in sphingolipid biosynthesis. Involved in the response to syringomycin. This is Sphingolipid C4-hydroxylase SUR2 (SUR2) from Saccharomyces cerevisiae (strain ATCC 204508 / S288c) (Baker's yeast).